The chain runs to 76 residues: Large ribosomal subunit protein bL31 (76 aa).

Zn(2+) contacts are provided by Cys16, Cys18, Cys37, and Cys40.

Belongs to the bacterial ribosomal protein bL31 family. Type A subfamily. In terms of assembly, part of the 50S ribosomal subunit. Requires Zn(2+) as cofactor.

In terms of biological role, binds the 23S rRNA. This Maridesulfovibrio salexigens (strain ATCC 14822 / DSM 2638 / NCIMB 8403 / VKM B-1763) (Desulfovibrio salexigens) protein is Large ribosomal subunit protein bL31.